The following is a 370-amino-acid chain: DNA primase large subunit PriL (370 aa).

Residues Cys-268, Cys-341, Cys-350, and Cys-354 each contribute to the [4Fe-4S] cluster site.

This sequence belongs to the eukaryotic-type primase large subunit family. Heterodimer of a small subunit (PriS) and a large subunit (PriL). It depends on [4Fe-4S] cluster as a cofactor.

Functionally, regulatory subunit of DNA primase, an RNA polymerase that catalyzes the synthesis of short RNA molecules used as primers for DNA polymerase during DNA replication. Stabilizes and modulates the activity of the small subunit, increasing the rate of DNA synthesis, and conferring RNA synthesis capability. The DNA polymerase activity may enable DNA primase to also catalyze primer extension after primer synthesis. May also play a role in DNA repair. This is DNA primase large subunit PriL from Archaeoglobus fulgidus (strain ATCC 49558 / DSM 4304 / JCM 9628 / NBRC 100126 / VC-16).